Reading from the N-terminus, the 501-residue chain is Glycerol kinase (501 aa).

Threonine 12 is a binding site for ADP. ATP contacts are provided by threonine 12, threonine 13, and serine 14. Threonine 12 provides a ligand contact to sn-glycerol 3-phosphate. Residue arginine 16 participates in ADP binding. Sn-glycerol 3-phosphate-binding residues include arginine 82, glutamate 83, tyrosine 134, and aspartate 244. Residues arginine 82, glutamate 83, tyrosine 134, aspartate 244, and glutamine 245 each coordinate glycerol. Residues threonine 266 and glycine 310 each coordinate ADP. ATP-binding residues include threonine 266, glycine 310, glutamine 314, and glycine 411. ADP contacts are provided by glycine 411 and asparagine 415.

The protein belongs to the FGGY kinase family.

The catalysed reaction is glycerol + ATP = sn-glycerol 3-phosphate + ADP + H(+). It participates in polyol metabolism; glycerol degradation via glycerol kinase pathway; sn-glycerol 3-phosphate from glycerol: step 1/1. Its activity is regulated as follows. Inhibited by fructose 1,6-bisphosphate (FBP). Functionally, key enzyme in the regulation of glycerol uptake and metabolism. Catalyzes the phosphorylation of glycerol to yield sn-glycerol 3-phosphate. The protein is Glycerol kinase of Methylorubrum populi (strain ATCC BAA-705 / NCIMB 13946 / BJ001) (Methylobacterium populi).